The primary structure comprises 337 residues: GDP-mannose transporter 1 (337 aa).

Residues 1 to 16 (MSELKTGHAGHNPWAS) lie on the Cytoplasmic side of the membrane. The chain crosses the membrane as a helical span at residues 17–37 (VANSGPISILSYCGSSILMTV). The Lumenal segment spans residues 38–51 (TNKFVVNLKDFNMN). A helical membrane pass occupies residues 52–72 (FVMLFVQSLVCTITLIILRIL). Residues 73–92 (GYAKFRSLNKTDAKNWFPIS) are Cytoplasmic-facing. A helical transmembrane segment spans residues 93–113 (FLLVLMIYTSSKALQYLAVPI). The Lumenal portion of the chain corresponds to 114 to 119 (YTIFKN). Asparagine 119 is a glycosylation site (N-linked (GlcNAc...) asparagine). A helical membrane pass occupies residues 120 to 140 (LTIILIAYGEVLFFGGSVTSM). Over 141 to 144 (ELSS) the chain is Cytoplasmic. Residues 145 to 165 (FLLMVLSSVVATWGDQQAVAA) traverse the membrane as a helical segment. Over 166–180 (KAASLAEGAAGAVAS) the chain is Lumenal. A helical membrane pass occupies residues 181-201 (FNPGYFWMFTNCITSALFVLI). Over 202-215 (MRKRIKLTNFKDFD) the chain is Cytoplasmic. Residues 216-236 (TMFYNNVLALPILLLFSFCVE) form a helical membrane-spanning segment. The Lumenal portion of the chain corresponds to 237-252 (DWSSVNLTNNFSNDSL). Residues asparagine 242, asparagine 246, and asparagine 249 are each glycosylated (N-linked (GlcNAc...) asparagine). The chain crosses the membrane as a helical span at residues 253–273 (TAMIISGVASVGISYCSGWCV). The Cytoplasmic portion of the chain corresponds to 274–279 (RVTSST). The helical transmembrane segment at 280 to 300 (TYSMVGALNKLPIALSGLIFF) threads the bilayer. The Lumenal segment spans residues 301 to 304 (DAPR). A helical transmembrane segment spans residues 305–325 (NFLSILSIFIGFLSGIIYAVA). The Cytoplasmic portion of the chain corresponds to 326–337 (KQKKQQAQPLRK).

The protein belongs to the TPT transporter family. SLC35D subfamily. As to quaternary structure, homooligomer.

The protein resides in the golgi apparatus membrane. Its subcellular location is the cytoplasmic vesicle membrane. It localises to the endoplasmic reticulum membrane. Functionally, involved in the import of GDP-mannose from the cytoplasm into the Golgi lumen. Defective copy causes severe glycosylation defect and abnormal retention of soluble endoplasmic reticulum proteins. Involved in vanadate sensitivity. In Saccharomyces cerevisiae (strain YJM789) (Baker's yeast), this protein is GDP-mannose transporter 1 (VRG4).